The chain runs to 417 residues: Gamma-glutamyl phosphate reductase (417 aa).

It belongs to the gamma-glutamyl phosphate reductase family.

The protein localises to the cytoplasm. It carries out the reaction L-glutamate 5-semialdehyde + phosphate + NADP(+) = L-glutamyl 5-phosphate + NADPH + H(+). It participates in amino-acid biosynthesis; L-proline biosynthesis; L-glutamate 5-semialdehyde from L-glutamate: step 2/2. Functionally, catalyzes the NADPH-dependent reduction of L-glutamate 5-phosphate into L-glutamate 5-semialdehyde and phosphate. The product spontaneously undergoes cyclization to form 1-pyrroline-5-carboxylate. This Escherichia coli (strain SMS-3-5 / SECEC) protein is Gamma-glutamyl phosphate reductase.